The sequence spans 276 residues: 4-deoxy-L-threo-5-hexosulose-uronate ketol-isomerase (276 aa).

Residues H194, H196, E201, and H243 each contribute to the Zn(2+) site.

Belongs to the KduI family. It depends on Zn(2+) as a cofactor.

It carries out the reaction 5-dehydro-4-deoxy-D-glucuronate = 3-deoxy-D-glycero-2,5-hexodiulosonate. The protein operates within glycan metabolism; pectin degradation; 2-dehydro-3-deoxy-D-gluconate from pectin: step 4/5. Its function is as follows. Catalyzes the isomerization of 5-dehydro-4-deoxy-D-glucuronate to 3-deoxy-D-glycero-2,5-hexodiulosonate. In Shouchella clausii (strain KSM-K16) (Alkalihalobacillus clausii), this protein is 4-deoxy-L-threo-5-hexosulose-uronate ketol-isomerase.